Here is a 1161-residue protein sequence, read N- to C-terminus: Nardilysin (1161 aa).

The first 18 residues, 1–18, serve as a signal peptide directing secretion; that stretch reads MLRRVAVAAVCVTGRKLR. Disordered stretches follow at residues 49–103 and 130–218; these read MPGR…IIKS and VEGK…KKTT. Phosphoserine occurs at positions 85, 91, and 93. Residues 138–209 show a composition bias toward acidic residues; that stretch reads TDEEEEEEEE…EENELEELEE (72 aa). Position 244 (His-244) interacts with Zn(2+). Catalysis depends on Glu-247, which acts as the Proton acceptor. Residues His-248 and Glu-325 each coordinate Zn(2+).

Belongs to the peptidase M16 family. Interacts with BACE1 and NRG1. Zn(2+) serves as cofactor. In terms of tissue distribution, highly expressed in brain of early postnatal mice but expressed at a lower level in the brains of adult mice. Expression is high in cortical neurons, and lower in neurons in the striatum. Very low expression detected in the corpus callosum. Also expressed in the gray matter in spinal cord and dorsal root ganglia.

Its subcellular location is the mitochondrion. The protein localises to the cell projection. It localises to the dendrite. The catalysed reaction is Hydrolysis of polypeptides, preferably at -Xaa-|-Arg-Lys-, and less commonly at -Arg-|-Arg-Xaa-, in which Xaa is not Arg or Lys.. Cleaves peptide substrates on the N-terminus of arginine residues in dibasic pairs. Is a critical activator of BACE1- and ADAM17-mediated pro-neuregulin ectodomain shedding, involved in the positive regulation of axonal maturation and myelination. Required for proper functioning of 2-oxoglutarate dehydrogenase (OGDH). In Mus musculus (Mouse), this protein is Nardilysin.